The following is a 326-amino-acid chain: Fructose operon regulatory protein (326 aa).

In terms of domain architecture, HTH lacI-type spans 1 to 58 (MTLDEIAKLAGVSKTTASYVINGKAQKYRISEKTQHKVMAVVEQYNFRPDHAASALRA). The H-T-H motif DNA-binding region spans 3–22 (LDEIAKLAGVSKTTASYVIN).

As to quaternary structure, homodimer.

With respect to regulation, interaction with F1P may induce a structural change in the DNA spacer region between the -35 and -10 elements, thereby facilitating RNAP binding to the promoter to trigger the transcriptional activation of the fru operon. Interaction with F1P does not release FruR from its binding sequence. Its function is as follows. Regulates the expression of the fruBKA (fru) operon, which encodes proteins involved in the import and metabolism of fructose. In the absence of fructose 1-phosphate (F1P), binds to the promoter region of fruB, interferes with the binding of the RNA polymerase (RNAP) to the promoter and represses the expression of the operon. In the presence of F1P, activates the transcription of the fru operon by facilitating the binding of RNAP to the promoter. Essential for the expression of the fru operon and thus for growth on fructose. This chain is Fructose operon regulatory protein, found in Vibrio cholerae serotype O1 (strain ATCC 39315 / El Tor Inaba N16961).